The sequence spans 435 residues: Xylose isomerase (435 aa).

Active-site residues include His100 and Asp103. Glu231, Glu267, His270, Asp295, Asp306, Asp308, and Asp338 together coordinate Mg(2+).

This sequence belongs to the xylose isomerase family. In terms of assembly, homotetramer. The cofactor is Mg(2+).

Its subcellular location is the cytoplasm. The enzyme catalyses alpha-D-xylose = alpha-D-xylulofuranose. The chain is Xylose isomerase from Brucella suis biovar 1 (strain 1330).